The primary structure comprises 149 residues: Transcriptional repressor NrdR (149 aa).

A zinc finger spans residues 3-34 (CPYCSYEESKVVDSRSAEDYNAIRRRRECLRC). One can recognise an ATP-cone domain in the interval 49–139 (ILVIKKDLSR…VYRQFKDINT (91 aa)).

Belongs to the NrdR family. The cofactor is Zn(2+).

Its function is as follows. Negatively regulates transcription of bacterial ribonucleotide reductase nrd genes and operons by binding to NrdR-boxes. The protein is Transcriptional repressor NrdR of Clostridium perfringens (strain SM101 / Type A).